The sequence spans 319 residues: CBBY-like protein (319 aa).

The transit peptide at 1–65 (MATVKISLSL…YRSSRSVGVT (65 aa)) directs the protein to the chloroplast. Asp-82 serves as the catalytic Nucleophile. 2 residues coordinate Mg(2+): Asp-82 and Asp-84. Asp-82 serves as a coordination point for substrate. Asp-84 acts as the Proton donor in catalysis. Substrate-binding positions include Glu-91, 125-129 (GGKER), 158-161 (HKQK), and 198-204 (STSNEKA). Asp-258 lines the Mg(2+) pocket.

It belongs to the HAD-like hydrolase superfamily. DOG/GPP family. It depends on Mg(2+) as a cofactor.

Its subcellular location is the plastid. It localises to the chloroplast. The catalysed reaction is D-xylulose 1,5-bisphosphate + H2O = D-xylulose 5-phosphate + phosphate. In terms of biological role, highly selective xylulose-1,5-bisphosphate (XuBP) phosphatase. Also shows activity towards ribulose-1,5-bisphosphate (RuBP) and fructose-1,6-bisphosphate (FBP), but not towards fructose-6-phosphate (F6P) or ribulose-5-phosphate (Ru5P). Degrades xylulose-1,5-bisphosphate, a potent inhibitor of rubisco produced by the rubisco itself. The protein is CBBY-like protein of Arabidopsis thaliana (Mouse-ear cress).